The sequence spans 552 residues: Putative transport protein NT01EI_3867 (552 aa).

5 consecutive transmembrane segments (helical) span residues 4–24, 26–46, 65–85, 90–112, and 158–178; these read IALT…IGNW, IYGV…VGHF, FGLI…FFSS, GLRL…AAIH, and MGYA…IWLI. RCK C-terminal domains follow at residues 191 to 276 and 279 to 361; these read RDFD…VIGE and DTSL…IVGN. 6 helical membrane passes run 371-391, 403-425, 439-459, 464-484, 493-513, and 530-550; these read MLPV…PLFI, AGGP…LYWF, IVLF…DTLL, VTWI…AALL, YLTL…LAFA, and VYPL…LLFW.

Belongs to the AAE transporter (TC 2.A.81) family. YidE subfamily.

It localises to the cell membrane. This Edwardsiella ictaluri (strain 93-146) protein is Putative transport protein NT01EI_3867.